Consider the following 691-residue polypeptide: DNA-directed RNA polymerase subunit beta' (691 aa).

Residues cysteine 76, cysteine 78, cysteine 94, and cysteine 97 each contribute to the Zn(2+) site. 3 residues coordinate Mg(2+): aspartate 496, aspartate 498, and aspartate 500.

Belongs to the RNA polymerase beta' chain family. RpoC1 subfamily. It depends on Mg(2+) as a cofactor. Zn(2+) serves as cofactor.

It is found in the plastid. The catalysed reaction is RNA(n) + a ribonucleoside 5'-triphosphate = RNA(n+1) + diphosphate. In terms of biological role, DNA-dependent RNA polymerase catalyzes the transcription of DNA into RNA using the four ribonucleoside triphosphates as substrates. In Cuscuta exaltata (Tall dodder), this protein is DNA-directed RNA polymerase subunit beta'.